A 507-amino-acid chain; its full sequence is Phosphoenolpyruvate carboxylase (507 aa).

The interval 1-25 (MHKIDRKIPNIMGTQHPDNAGVPFF) is disordered.

This sequence belongs to the PEPCase type 2 family. As to quaternary structure, homotetramer. Mg(2+) is required as a cofactor.

It carries out the reaction oxaloacetate + phosphate = phosphoenolpyruvate + hydrogencarbonate. Its function is as follows. Catalyzes the irreversible beta-carboxylation of phosphoenolpyruvate (PEP) to form oxaloacetate (OAA), a four-carbon dicarboxylic acid source for the tricarboxylic acid cycle. In Oenococcus oeni (strain ATCC BAA-331 / PSU-1), this protein is Phosphoenolpyruvate carboxylase.